Reading from the N-terminus, the 513-residue chain is Butyrophilin subfamily 3 member A1 (513 aa).

The N-terminal stretch at 1-29 (MKMASFLAFLLLNFRVCLLLLQLLMPHSA) is a signal peptide. Ig-like V-type domains follow at residues 30-139 (QFSV…KALV) and 145-236 (ALGS…ASIS). Residues 30–254 (QFSVLGPSGP…AQRWIAALAG (225 aa)) lie on the Extracellular side of the membrane. 2 disulfides stabilise this stretch: Cys52-Cys126 and Cys166-Cys220. N-linked (GlcNAc...) asparagine glycosylation is present at Asn115. The chain crosses the membrane as a helical span at residues 255–271 (TLPVLLLLLGGAGYFLW). The Cytoplasmic portion of the chain corresponds to 272–513 (QQQEEKKTQF…EPTALTICPA (242 aa)). The B30.2/SPRY domain maps to 322–513 (RGERHSAYNE…EPTALTICPA (192 aa)).

This sequence belongs to the immunoglobulin superfamily. BTN/MOG family. As to quaternary structure, homodimer. Post-translationally, N-glycosylated. Detected on T-cells, natural killer cells, dendritic cells and macrophages (at protein level). Ubiquitous. Highly expressed in heart, pancreas and lung, Moderately expressed in placenta, liver and muscle.

It localises to the cell membrane. Plays a role in T-cell activation and in the adaptive immune response. Regulates the proliferation of activated T-cells. Regulates the release of cytokines and IFNG by activated T-cells. Mediates the response of T-cells toward infected and transformed cells that are characterized by high levels of phosphorylated metabolites, such as isopentenyl pyrophosphate. This is Butyrophilin subfamily 3 member A1 (BTN3A1) from Homo sapiens (Human).